Consider the following 105-residue polypeptide: N(4)-acetylcytidine amidohydrolase (105 aa).

An ASCH domain is found at 7–93 (TFFERFEHDI…VIAEIYPGLE (87 aa)). Catalysis depends on Lys-21, which acts as the Proton acceptor. Residue Thr-24 is the Nucleophile of the active site. The active-site Proton donor is the Glu-74.

The protein belongs to the N(4)-acetylcytidine amidohydrolase family.

It catalyses the reaction N(4)-acetylcytidine + H2O = cytidine + acetate + H(+). The enzyme catalyses N(4)-acetyl-2'-deoxycytidine + H2O = 2'-deoxycytidine + acetate + H(+). It carries out the reaction N(4)-acetylcytosine + H2O = cytosine + acetate + H(+). Its function is as follows. Catalyzes the hydrolysis of N(4)-acetylcytidine (ac4C). The sequence is that of N(4)-acetylcytidine amidohydrolase from Shewanella baltica (strain OS195).